The chain runs to 314 residues: ATP synthase gamma chain (314 aa).

This sequence belongs to the ATPase gamma chain family. In terms of assembly, F-type ATPases have 2 components, CF(1) - the catalytic core - and CF(0) - the membrane proton channel. CF(1) has five subunits: alpha(3), beta(3), gamma(1), delta(1), epsilon(1). CF(0) has three main subunits: a, b and c.

The protein localises to the cell membrane. Produces ATP from ADP in the presence of a proton gradient across the membrane. The gamma chain is believed to be important in regulating ATPase activity and the flow of protons through the CF(0) complex. The chain is ATP synthase gamma chain from Cutibacterium acnes (strain DSM 16379 / KPA171202) (Propionibacterium acnes).